The following is a 434-amino-acid chain: MAFRRINNLELFIKRCSAPTLYYSSIRTATGNNYSNNTANITTDSSSSSNNNSNRNNKNDNNNEDNNKFNWRSLVRFFVPFSLGAVASSLVMKRDDLELTPTISAARPSGRRREFNFIADVVGGCADSVVYIEIKDTRHFDYFSGQPITASNGSGFVIEQNGLILTNAHVVINKPHTMVQVRLSDGRTFPATIEDVDQTSDLATLRIQVNNLPVMRLGKSSTLRSGEWVVALGSPLALSNTVTAGVISSTQRASQELGLRNRDINYLQTDAAITFGNSGGPLVNLDGEAIGVNSMKVTAGISFAIPIDYVKVFLERAAERRKKGSAYKTGYPVKRYMGITMLTLTPDILFELKSRSQNMPSNLMHGVLVWKVIVGSPAHSGGLQPGDIVTHINKKEIKNSSDVYDALGCGDKELNMIIMRGVKQMHVTITPEDP.

Residues 34 to 65 (YSNNTANITTDSSSSSNNNSNRNNKNDNNNED) are disordered. Low complexity predominate over residues 35-60 (SNNTANITTDSSSSSNNNSNRNNKND). The helical transmembrane segment at 74 to 92 (LVRFFVPFSLGAVASSLVM) threads the bilayer. The short motif at 85–88 (AVAS) is the IAP-binding element. Residues 151-314 (SNGSGFVIEQ…IPIDYVKVFL (164 aa)) are serine protease. Active-site charge relay system residues include His-169, Asp-201, and Ser-278. A PDZ domain is found at 337–424 (MGITMLTLTP…NMIIMRGVKQ (88 aa)).

This sequence belongs to the peptidase S1C family. As to quaternary structure, interacts with th/DIAP1 (via BIR 2 domain).

The protein localises to the mitochondrion intermembrane space. It is found in the mitochondrion membrane. The enzyme catalyses Cleavage of non-polar aliphatic amino-acids at the P1 position, with a preference for Val, Ile and Met. At the P2 and P3 positions, Arg is selected most strongly with a secondary preference for other hydrophilic residues.. In terms of biological role, serine protease that shows proteolytic activity against a non-specific substrate beta-casein. Promotes or induces cell death either by direct binding to and inhibition of BIRC proteins (also called inhibitor of apoptosis proteins, IAPs), leading to an increase in caspase activity, or by a BIRC inhibition-independent, caspase-independent and serine protease activity-dependent mechanism. Can antagonize antiapoptotic activity of th/Diap1 by directly inducing the degradation of th/Diap1. This Drosophila willistoni (Fruit fly) protein is Serine protease HTRA2, mitochondrial.